Reading from the N-terminus, the 246-residue chain is Pyridoxine 5'-phosphate synthase (246 aa).

Asn-6 is a binding site for 3-amino-2-oxopropyl phosphate. 8 to 9 is a 1-deoxy-D-xylulose 5-phosphate binding site; the sequence is DH. Arg-17 contacts 3-amino-2-oxopropyl phosphate. His-49 serves as the catalytic Proton acceptor. 1-deoxy-D-xylulose 5-phosphate is bound by residues Arg-51 and His-56. Residue Glu-76 is the Proton acceptor of the active site. Thr-106 is a binding site for 1-deoxy-D-xylulose 5-phosphate. The active-site Proton donor is the His-196. 3-amino-2-oxopropyl phosphate is bound by residues Gly-197 and 219 to 220; that span reads GH.

The protein belongs to the PNP synthase family. In terms of assembly, homooctamer; tetramer of dimers.

The protein localises to the cytoplasm. The catalysed reaction is 3-amino-2-oxopropyl phosphate + 1-deoxy-D-xylulose 5-phosphate = pyridoxine 5'-phosphate + phosphate + 2 H2O + H(+). Its pathway is cofactor biosynthesis; pyridoxine 5'-phosphate biosynthesis; pyridoxine 5'-phosphate from D-erythrose 4-phosphate: step 5/5. Catalyzes the complicated ring closure reaction between the two acyclic compounds 1-deoxy-D-xylulose-5-phosphate (DXP) and 3-amino-2-oxopropyl phosphate (1-amino-acetone-3-phosphate or AAP) to form pyridoxine 5'-phosphate (PNP) and inorganic phosphate. The sequence is that of Pyridoxine 5'-phosphate synthase from Akkermansia muciniphila (strain ATCC BAA-835 / DSM 22959 / JCM 33894 / BCRC 81048 / CCUG 64013 / CIP 107961 / Muc).